The primary structure comprises 158 residues: MQKIPLTVRGAELLKQELQQLKSVARPEVIEAIAEARSHGDLSENAEYEAAKERQGFIEGRISELEHKLSVAHIINPTEIHAEGKIVFGTTVTLEDLETEEHVIYQIVGEDEADIKQGKIYVGSPIARALIGKEEGDTAEVQAPGGVREYDIIEVRYI.

Residues Ala-46–Glu-66 adopt a coiled-coil conformation.

The protein belongs to the GreA/GreB family.

Its function is as follows. Necessary for efficient RNA polymerase transcription elongation past template-encoded arresting sites. The arresting sites in DNA have the property of trapping a certain fraction of elongating RNA polymerases that pass through, resulting in locked ternary complexes. Cleavage of the nascent transcript by cleavage factors such as GreA or GreB allows the resumption of elongation from the new 3'terminus. GreA releases sequences of 2 to 3 nucleotides. The protein is Transcription elongation factor GreA of Neisseria meningitidis serogroup B (strain ATCC BAA-335 / MC58).